The sequence spans 270 residues: MCVVVPQGLRSVKHIILVLSGKGGVGKSTVATQLSWALYNQGNKVGLLDIDLCGPSIPRMMNVENNDVHQCSDGWVPVYTGPDQRLGVMSIGFLLHSKEDAVVWRGPKKNAMIKQFLSDVCWGDIDYLIIDTPPGTSDEHITVVENLKTCHPDGAILVTTPQGVAISDVRREITFCKKTKIPVLGIVENMSGFVCPHCSECTNVFSKGGGEALAKECEVPFLGCIPLDPNLTMNIEDGKSFSDLLSNSPAVESVNSIVTKISHATSQNQT.

21–28 provides a ligand contact to ATP; that stretch reads GKGGVGKS. [4Fe-4S] cluster contacts are provided by cysteine 195 and cysteine 198.

The protein belongs to the Mrp/NBP35 ATP-binding proteins family. NUBP2/CFD1 subfamily. In terms of assembly, heterotetramer of 2 NUBP1 and 2 NUBP2 chains. [4Fe-4S] cluster is required as a cofactor.

It is found in the cytoplasm. In terms of biological role, component of the cytosolic iron-sulfur (Fe/S) protein assembly (CIA) machinery. Required for maturation of extramitochondrial Fe-S proteins. The NUBP1-NUBP2 heterotetramer forms a Fe-S scaffold complex, mediating the de novo assembly of an Fe-S cluster and its transfer to target apoproteins. The sequence is that of Cytosolic Fe-S cluster assembly factor NUBP2 homolog from Nematostella vectensis (Starlet sea anemone).